The chain runs to 357 residues: Nitronate monooxygenase npaC (357 aa).

FMN is bound by residues Gln-167, Gly-172, and Gly-206.

This sequence belongs to the nitronate monooxygenase family. NMO class I subfamily. It depends on FMN as a cofactor.

Functionally, nitronate monooxygenase; part of the gene cluster that mediates the biosynthesis of the deadly neurotoxic nitroalkane 3-nitropropanoic acid (3-NPA) that acts as an antimetabolite of succinate and irreversibly inhibits succinate dehydrogenase and disrupts mitochondrial oxidative phosphorylation. Catalyzes the oxidation of 3-NPA to nitrite and malonic semialdehyde. NpaC is not conserved in all fungal npa clusters and, while it is possible that it serves as a self-protection mechanism against accumulation of 3-NPA (by npaA and npaB) in the producing host, the more likely scenario may be the three enzymes representing an alternative catabolic pathway of aspartate to generate readily metabolizable nitrogen and carbon sources. This is Nitronate monooxygenase npaC from Metarhizium robertsii (strain ARSEF 23 / ATCC MYA-3075) (Metarhizium anisopliae (strain ARSEF 23)).